The chain runs to 141 residues: Hemoglobin subunit alpha-1 (141 aa).

The Globin domain maps to 1-141 (VLSGSDKNNV…VGNVLTAKYR (141 aa)). Histidine 58 contacts O2. A heme b-binding site is contributed by histidine 87.

Belongs to the globin family. Heterotetramer of two alpha chains and two beta chains. As to expression, red blood cells.

Its function is as follows. Involved in oxygen transport from the lung to the various peripheral tissues. The protein is Hemoglobin subunit alpha-1 of Stercorarius maccormicki (South polar skua).